Here is a 685-residue protein sequence, read N- to C-terminus: Iron(3+)-hydroxamate import system permease protein FhuB (685 aa).

18 consecutive transmembrane segments (helical) span residues 35–55, 87–107, 120–140, 143–163, 172–192, 222–242, 265–285, 302–322, 328–348, 373–393, 416–436, 456–476, 479–499, 504–524, 553–573, 592–612, 632–652, and 660–680; these read ALLL…NFSV, LAIS…FQQV, VATG…PGAL, QFAA…VAWG, ILAG…LVIF, QLLG…LMGL, AIVL…IGLF, LMLA…IILW, MEVS…LWLL, LAFA…ALSF, WPRI…GCII, AAFG…GWLL, GSLG…RGGF, MLLA…MLQA, AIVM…LTIL, IALL…IGPL, MPHM…ADWC, and YQIP…IYLL.

This sequence belongs to the binding-protein-dependent transport system permease family. FecCD subfamily. In terms of assembly, the complex is composed of two ATP-binding proteins (FhuC), a transmembrane protein (FhuB) and a solute-binding protein (FhuD).

The protein resides in the cell inner membrane. Its function is as follows. Part of the ABC transporter complex FhuCDB involved in iron(3+)-hydroxamate import. Responsible for the translocation of the substrate across the membrane. Involved in ferrioxamine-mediated iron(III) utilization. This is Iron(3+)-hydroxamate import system permease protein FhuB (fhuB) from Salmonella typhimurium (strain LT2 / SGSC1412 / ATCC 700720).